Here is a 238-residue protein sequence, read N- to C-terminus: tRNA (guanine-N(7)-)-methyltransferase (238 aa).

Glutamate 70, aspartate 95, aspartate 122, and aspartate 145 together coordinate S-adenosyl-L-methionine. Residue aspartate 145 is part of the active site. Residues lysine 149, aspartate 181, and 216 to 219 (TKFE) each bind substrate.

This sequence belongs to the class I-like SAM-binding methyltransferase superfamily. TrmB family.

It carries out the reaction guanosine(46) in tRNA + S-adenosyl-L-methionine = N(7)-methylguanosine(46) in tRNA + S-adenosyl-L-homocysteine. It functions in the pathway tRNA modification; N(7)-methylguanine-tRNA biosynthesis. Catalyzes the formation of N(7)-methylguanine at position 46 (m7G46) in tRNA. The chain is tRNA (guanine-N(7)-)-methyltransferase from Neisseria meningitidis serogroup B (strain ATCC BAA-335 / MC58).